The primary structure comprises 190 residues: C-type lectin domain family 5 member A (190 aa).

The Cytoplasmic portion of the chain corresponds to 1–4; it reads MNWH. The chain crosses the membrane as a helical; Signal-anchor for type II membrane protein span at residues 5–25; it reads MIISGLIVVVIKVVGMTFFLL. At 26 to 190 the chain is on the extracellular side; the sequence is YFPQVFGKSN…YRWICEMNAK (165 aa). N-linked (GlcNAc...) asparagine glycosylation is found at N51, N146, and N153. Residues 80-186 enclose the C-type lectin domain; it reads HQGKCFFFSF…CEVSYRWICE (107 aa). Intrachain disulfides connect C101–C185 and C163–C177.

Monomer. Homodimer. The majority of CLEC5A is expressed as a monomeric form on macrophages. Interacts with TYROBP/DAP12. The interaction with TYROBP is required for CLEC5 cell surface expression. Interacts with HCST/DAP10. Forms a CLEC5A/TYROBP/HCST trimolecular complex depending almost solely on TYROBP. Post-translationally, N-glycosylated. Contains sialic acid residues. As to expression, strong expression in bone marrow cells and thioglycollate-induced neutrophils (at protein level). Expressed on granulocytes and monocytes from bone marrow and peripheral blood. Expressed in macrophage cell line J-774, but not in T-cell lines, B-cell lines, or mast cell lines.

Its subcellular location is the cell membrane. Its function is as follows. Functions as a positive regulator of osteoclastogenesis. Cell surface receptor that signals via TYROBP. Regulates inflammatory responses. The protein is C-type lectin domain family 5 member A (Clec5a) of Mus musculus (Mouse).